A 517-amino-acid polypeptide reads, in one-letter code: Probable mannosyltransferase KTR7 (517 aa).

Over 1–23 (MAIRLNPKVRRFLLDKCRQKRYG) the chain is Cytoplasmic. The helical; Signal-anchor for type II membrane protein transmembrane segment at 24-44 (FLFLGCIFAILYCMGTWPFFA) threads the bilayer. A stem region region spans residues 45–85 (KDIVHDPNNLPYSLQDYSTDKDEPFFRGCTDTKLYLQNPAY). Residues 45-517 (KDIVHDPNNL…IRRENFRVIE (473 aa)) lie on the Lumenal side of the membrane. The segment at 86 to 517 (SKMNASFVML…IRRENFRVIE (432 aa)) is catalytic. N-linked (GlcNAc...) asparagine glycans are attached at residues Asn-89 and Asn-144. Glu-367 (nucleophile) is an active-site residue.

It belongs to the glycosyltransferase 15 family.

Its subcellular location is the membrane. Possible glycosyltransferase that transfers an alpha-D-mannosyl residue from GDP-mannose into lipid-linked oligosaccharide, forming an alpha-(1-&gt;2)-D-mannosyl-D-mannose linkage. The chain is Probable mannosyltransferase KTR7 (KTR7) from Saccharomyces cerevisiae (strain ATCC 204508 / S288c) (Baker's yeast).